The chain runs to 202 residues: GTP cyclohydrolase-2 (202 aa).

A GTP-binding site is contributed by 48 to 52 (RLHSE). Zn(2+) is bound by residues C53, C64, and C66. Residues Q69, 91–93 (EGR), and T113 each bind GTP. The active-site Proton acceptor is D125. Residue R127 is the Nucleophile of the active site. The GTP site is built by T148 and K153.

Belongs to the GTP cyclohydrolase II family. Zn(2+) serves as cofactor.

It catalyses the reaction GTP + 4 H2O = 2,5-diamino-6-hydroxy-4-(5-phosphoribosylamino)-pyrimidine + formate + 2 phosphate + 3 H(+). It functions in the pathway cofactor biosynthesis; riboflavin biosynthesis; 5-amino-6-(D-ribitylamino)uracil from GTP: step 1/4. In terms of biological role, catalyzes the conversion of GTP to 2,5-diamino-6-ribosylamino-4(3H)-pyrimidinone 5'-phosphate (DARP), formate and pyrophosphate. This chain is GTP cyclohydrolase-2, found in Colwellia psychrerythraea (strain 34H / ATCC BAA-681) (Vibrio psychroerythus).